Here is a 197-residue protein sequence, read N- to C-terminus: U1 small nuclear ribonucleoprotein C (197 aa).

The Matrin-type zinc-finger motif lies at 4-36 (YYCEYCDIYLTHSSPVGRRQHNQGRKHISAKIE). Residues 128–137 (FHNNKRINNI) are compositionally biased toward low complexity. The segment at 128–178 (FHNNKRINNIPKPYNNYTNKPITNSSYKNDKQDYRNNNESNDNMNSNNFSN) is disordered. The segment covering 142 to 154 (NNYTNKPITNSSY) has biased composition (polar residues). Positions 164-178 (NNESNDNMNSNNFSN) are enriched in low complexity.

Belongs to the U1 small nuclear ribonucleoprotein C family. U1 snRNP is composed of the 7 core Sm proteins B/B', D1, D2, D3, E, F and G that assemble in a heptameric protein ring on the Sm site of the small nuclear RNA to form the core snRNP, and at least 3 U1 snRNP-specific proteins U1-70K, U1-A and U1-C. U1-C interacts with U1 snRNA and the 5' splice-site region of the pre-mRNA.

The protein resides in the nucleus. Its function is as follows. Component of the spliceosomal U1 snRNP, which is essential for recognition of the pre-mRNA 5' splice-site and the subsequent assembly of the spliceosome. U1-C is directly involved in initial 5' splice-site recognition for both constitutive and regulated alternative splicing. The interaction with the 5' splice-site seems to precede base-pairing between the pre-mRNA and the U1 snRNA. Stimulates commitment or early (E) complex formation by stabilizing the base pairing of the 5' end of the U1 snRNA and the 5' splice-site region. The polypeptide is U1 small nuclear ribonucleoprotein C (SNRPC) (Plasmodium berghei (strain Anka)).